The following is a 369-amino-acid chain: F-box protein UCC1 (369 aa).

The F-box domain maps to 8–45 (LMDLPLEIHLSLLEYVPNELRAVNKYFYVLHNHSYKEK).

Component of the SCF(UCC1) E3 ubiquitin-protein ligase complex composed of CDC53, SKP1, RBX1 and UCC1. Interacts with CIT2. In terms of processing, monoubiquitinated by UBC4.

It functions in the pathway protein modification; protein ubiquitination. Its function is as follows. Substrate recognition component of the SKP1-CUL1-F-box protein E3 ubiquitin-protein ligase complex SCF(UCC1) which mediates the ubiquitination and subsequent proteasomal degradation of target proteins. The SCF(UCC1) complex acts as a metabolic switch for the glyoxylate cycle and regulates the level of CIT2 protein to maintain citrate homeostasis. The sequence is that of F-box protein UCC1 (UCC1) from Saccharomyces cerevisiae (strain ATCC 204508 / S288c) (Baker's yeast).